Here is a 450-residue protein sequence, read N- to C-terminus: Glutamate--tRNA ligase 1 (450 aa).

Positions 7-17 (PSPTGYMHVGN) match the 'HIGH' region motif. A 'KMSKS' region motif is present at residues 236 to 240 (KISKR). ATP is bound at residue lysine 239.

This sequence belongs to the class-I aminoacyl-tRNA synthetase family. Glutamate--tRNA ligase type 1 subfamily. In terms of assembly, monomer.

It is found in the cytoplasm. It catalyses the reaction tRNA(Glu) + L-glutamate + ATP = L-glutamyl-tRNA(Glu) + AMP + diphosphate. Catalyzes the attachment of glutamate to tRNA(Glu) in a two-step reaction: glutamate is first activated by ATP to form Glu-AMP and then transferred to the acceptor end of tRNA(Glu). This chain is Glutamate--tRNA ligase 1, found in Anaplasma phagocytophilum (strain HZ).